Consider the following 340-residue polypeptide: Arginine N-succinyltransferase subunit beta (340 aa).

The protein belongs to the succinylarginine dihydrolase family. In terms of assembly, heterotetramer of two alpha and two beta subunits.

It catalyses the reaction succinyl-CoA + L-arginine = N(2)-succinyl-L-arginine + CoA + H(+). It functions in the pathway amino-acid degradation; L-arginine degradation via AST pathway; L-glutamate and succinate from L-arginine: step 1/5. This Pseudomonas aeruginosa (strain ATCC 15692 / DSM 22644 / CIP 104116 / JCM 14847 / LMG 12228 / 1C / PRS 101 / PAO1) protein is Arginine N-succinyltransferase subunit beta (aruG).